The sequence spans 118 residues: MQQAPVIHEIENEYLRKDVPEFRVGDTVRVSVKVVEGTRERIQDFEGVVIRRRRMGVNENFTVRRIASHGIGVERTFLLHSPRIDGVKLVRTGKVRQANLYYLRGRTGKAARIKERRG.

Belongs to the bacterial ribosomal protein bL19 family.

This protein is located at the 30S-50S ribosomal subunit interface and may play a role in the structure and function of the aminoacyl-tRNA binding site. The protein is Large ribosomal subunit protein bL19 of Herpetosiphon aurantiacus (strain ATCC 23779 / DSM 785 / 114-95).